Reading from the N-terminus, the 344-residue chain is Uroporphyrinogen decarboxylase (344 aa).

Residues 25 to 29 (RQAGR), D75, Y152, S207, and H323 contribute to the substrate site.

Belongs to the uroporphyrinogen decarboxylase family. As to quaternary structure, homodimer.

Its subcellular location is the cytoplasm. The catalysed reaction is uroporphyrinogen III + 4 H(+) = coproporphyrinogen III + 4 CO2. It participates in porphyrin-containing compound metabolism; protoporphyrin-IX biosynthesis; coproporphyrinogen-III from 5-aminolevulinate: step 4/4. Functionally, catalyzes the decarboxylation of four acetate groups of uroporphyrinogen-III to yield coproporphyrinogen-III. The sequence is that of Uroporphyrinogen decarboxylase from Roseobacter denitrificans (strain ATCC 33942 / OCh 114) (Erythrobacter sp. (strain OCh 114)).